The following is a 57-amino-acid chain: uncharacterized protein (57 aa).

It is found in the plastid. This is an uncharacterized protein from Euglena longa (Euglenophycean alga).